The chain runs to 82 residues: RNA-binding protein GWCH70_0105 (82 aa).

It belongs to the eukaryotic ribosomal protein eL8 family.

This is RNA-binding protein GWCH70_0105 from Geobacillus sp. (strain WCH70).